Consider the following 95-residue polypeptide: Stationary phase-expressed protein 1 (95 aa).

The chain crosses the membrane as a helical span at residues 20–38 (FRYIMLGLVGAAVVPTAYM).

It localises to the mitochondrion membrane. This chain is Stationary phase-expressed protein 1 (SPG1), found in Saccharomyces cerevisiae (strain RM11-1a) (Baker's yeast).